The chain runs to 73 residues: Translation initiation factor IF-1 (73 aa).

The S1-like domain occupies 1-72 (MAKEDAIEVE…NRGRITYRSK (72 aa)).

It belongs to the IF-1 family. Component of the 30S ribosomal translation pre-initiation complex which assembles on the 30S ribosome in the order IF-2 and IF-3, IF-1 and N-formylmethionyl-tRNA(fMet); mRNA recruitment can occur at any time during PIC assembly.

The protein localises to the cytoplasm. In terms of biological role, one of the essential components for the initiation of protein synthesis. Stabilizes the binding of IF-2 and IF-3 on the 30S subunit to which N-formylmethionyl-tRNA(fMet) subsequently binds. Helps modulate mRNA selection, yielding the 30S pre-initiation complex (PIC). Upon addition of the 50S ribosomal subunit IF-1, IF-2 and IF-3 are released leaving the mature 70S translation initiation complex. The sequence is that of Translation initiation factor IF-1 from Syntrophobacter fumaroxidans (strain DSM 10017 / MPOB).